We begin with the raw amino-acid sequence, 976 residues long: Vacuolar membrane protease (976 aa).

Residues 1–15 lie on the Cytoplasmic side of the membrane; it reads MKLKSVFRSVLKYRK. The helical transmembrane segment at 16-36 threads the bilayer; it reads TNLSLLLLITYSIITLLYIFD. Over 37–359 the chain is Vacuolar; it reads HERYKLNLPK…KFFVISAKTL (323 aa). N-linked (GlcNAc...) asparagine glycosylation is found at asparagine 96 and asparagine 121. 2 residues coordinate Zn(2+): histidine 156 and aspartate 168. Asparagine 189 is a glycosylation site (N-linked (GlcNAc...) asparagine). The active-site Proton acceptor is the glutamate 200. Glutamate 201 contributes to the Zn(2+) binding site. Residues asparagine 212 and asparagine 217 are each glycosylated (N-linked (GlcNAc...) asparagine). The Zn(2+) site is built by glutamate 226 and histidine 300. The helical transmembrane segment at 360–380 threads the bilayer; sequence FYWNCIFLLVSPVVAIGLYLI. Over 381 to 392 the chain is Cytoplasmic; it reads SRDRMTWKSHSW. The chain crosses the membrane as a helical span at residues 393 to 412; it reads LSWTRFPLSLAAGIIVQKLF. Topologically, residues 413-428 are vacuolar; that stretch reads SNDIIRSNPLTFSRNY. A helical membrane pass occupies residues 429–449; the sequence is FWPISAFFTQVIFTSYVLINC. Residues 450–461 lie on the Cytoplasmic side of the membrane; the sequence is SNFFFPCADMKS. A helical membrane pass occupies residues 462 to 482; that stretch reads LSIIELFIILWTILLFTSKLL. Over 483-496 the chain is Vacuolar; it reads YSSDYRYTGLYPLS. The chain crosses the membrane as a helical span at residues 497–517; it reads IFFLLSTIAAILRLLALALGM. Topologically, residues 518–627 are cytoplasmic; that stretch reads RTRKRLGREC…NSLKLEYTDY (110 aa). A disordered region spans residues 528-610; the sequence is RDHHSNYSSH…PLLKGSNSME (83 aa). Residues 549–558 show a composition bias toward polar residues; that stretch reads NLEQPQDQFT. Positions 559–570 are enriched in low complexity; the sequence is SSQDDQASIQDD. The span at 582-601 shows a compositional bias: basic and acidic residues; that stretch reads NVDEDHGMDSSSQQHDERVP. Residues 628-648 form a helical membrane-spanning segment; sequence AWIIQFLLIVPIPSFILFNSV. The Vacuolar portion of the chain corresponds to 649 to 668; it reads DVIMDALNHTVQEGSKATFD. Asparagine 656 carries N-linked (GlcNAc...) asparagine glycosylation. A helical transmembrane segment spans residues 669–689; it reads VLRFGMVGSILMALPILPFFY. Over 690–692 the chain is Cytoplasmic; the sequence is KVN. A helical membrane pass occupies residues 693–713; the sequence is YITISLTALLFLISASKTLLV. Over 714 to 976 the chain is Vacuolar; it reads HPFTNSNPLK…LVIVKDAIIL (263 aa). Asparagine 768, asparagine 796, asparagine 811, asparagine 866, and asparagine 937 each carry an N-linked (GlcNAc...) asparagine glycan.

The protein belongs to the peptidase M28 family. Zn(2+) serves as cofactor.

The protein resides in the vacuole membrane. In terms of biological role, may be involved in vacuolar sorting and osmoregulation. In Saccharomyces cerevisiae (strain RM11-1a) (Baker's yeast), this protein is Vacuolar membrane protease.